A 122-amino-acid chain; its full sequence is Histone H2B type 2-K1 (122 aa).

A disordered region spans residues 1-30; that stretch reads MSAEYGQRQQPGGRGGRSSGNKKSKKRCRR. Residues 20–30 are compositionally biased toward basic residues; the sequence is GNKKSKKRCRR. K31 carries the post-translational modification N6-(2-hydroxyisobutyryl)lysine; alternate. N6-(beta-hydroxybutyryl)lysine; alternate is present on K31. The residue at position 31 (K31) is an N6-crotonyllysine; alternate. K31 carries the N6-glutaryllysine; alternate modification. Position 31 is an N6-succinyllysine; alternate (K31). K31 participates in a covalent cross-link: Glycyl lysine isopeptide (Lys-Gly) (interchain with G-Cter in ubiquitin); alternate. A Phosphoserine modification is found at S33. N6-(2-hydroxyisobutyryl)lysine; alternate is present on residues K40, K43, and K54. 2 positions are modified to N6-glutaryllysine; alternate: K40 and K43. An N6-lactoyllysine; alternate modification is found at K40. N6-methyllysine is present on K43. K43 is subject to N6-methyllysine; alternate. K54 is subject to N6,N6-dimethyllysine. K54 is subject to N6,N6-dimethyllysine; alternate. R76 is subject to Dimethylated arginine. Position 81 is a phosphoserine (S81). Omega-N-methylarginine occurs at positions 83 and 89. K105 bears the N6-(2-hydroxyisobutyryl)lysine; alternate mark. The residue at position 105 (K105) is an N6-glutaryllysine; alternate. N6-lactoyllysine; alternate is present on K105. K105 is subject to N6-methyllysine. K105 carries the post-translational modification N6-methyllysine; alternate. O-linked (GlcNAc) serine glycosylation is present at S109. T112 is subject to Phosphothreonine. 2 positions are modified to N6-(2-hydroxyisobutyryl)lysine; alternate: K113 and K117. N6-(beta-hydroxybutyryl)lysine; alternate is present on residues K113 and K117. Residues K113 and K117 each carry the N6-glutaryllysine; alternate modification. N6-succinyllysine; alternate occurs at positions 113 and 117. The residue at position 113 (K113) is an N6-lactoyllysine; alternate. N6-malonyllysine; alternate is present on K113. An N6-methylated lysine; alternate modification is found at K113. A Glycyl lysine isopeptide (Lys-Gly) (interchain with G-Cter in ubiquitin); alternate cross-link involves residue K117.

This sequence belongs to the histone H2B family. In terms of assembly, the nucleosome is a histone octamer containing two molecules each of H2A, H2B, H3 and H4 assembled in one H3-H4 heterotetramer and two H2A-H2B heterodimers. The octamer wraps approximately 147 bp of DNA.

The protein resides in the chromosome. The protein localises to the nucleus. Its function is as follows. Core component of nucleosome. Nucleosomes wrap and compact DNA into chromatin, limiting DNA accessibility to the cellular machineries which require DNA as a template. Histones thereby play a central role in transcription regulation, DNA repair, DNA replication and chromosomal stability. DNA accessibility is regulated via a complex set of post-translational modifications of histones, also called histone code, and nucleosome remodeling. The chain is Histone H2B type 2-K1 from Homo sapiens (Human).